Reading from the N-terminus, the 64-residue chain is Large ribosomal subunit protein bL35c (64 aa).

The protein belongs to the bacterial ribosomal protein bL35 family.

It localises to the plastid. The protein localises to the chloroplast. The protein is Large ribosomal subunit protein bL35c of Thalassiosira pseudonana (Marine diatom).